The following is an 81-amino-acid chain: Cell division protein ZapB (81 aa).

Residues 5-81 adopt a coiled-coil conformation; sequence LEVFEKLESK…QALLGRMEEV (77 aa). The segment at 43 to 64 is disordered; it reads VQSAQHGREELERENSQLKEQQ. Residues 48-59 show a composition bias toward basic and acidic residues; it reads HGREELERENSQ.

It belongs to the ZapB family. As to quaternary structure, homodimer. The ends of the coiled-coil dimer bind to each other, forming polymers. Interacts with FtsZ.

The protein localises to the cytoplasm. Functionally, non-essential, abundant cell division factor that is required for proper Z-ring formation. It is recruited early to the divisome by direct interaction with FtsZ, stimulating Z-ring assembly and thereby promoting cell division earlier in the cell cycle. Its recruitment to the Z-ring requires functional FtsA or ZipA. This Klebsiella pneumoniae subsp. pneumoniae (strain ATCC 700721 / MGH 78578) protein is Cell division protein ZapB.